The primary structure comprises 76 residues: Conotoxin MaIr332 (76 aa).

The first 21 residues, Met-1–Ala-21, serve as a signal peptide directing secretion. Residues Asp-22–Asn-48 constitute a propeptide that is removed on maturation. 3 disulfides stabilise this stretch: Cys-51–Cys-66, Cys-58–Cys-70, and Cys-65–Cys-75.

It belongs to the conotoxin O1 superfamily. In terms of tissue distribution, expressed by the venom duct.

It is found in the secreted. The polypeptide is Conotoxin MaIr332 (Conus marmoreus (Marble cone)).